The following is a 358-amino-acid chain: 4-hydroxy-3-methylbut-2-en-1-yl diphosphate synthase (flavodoxin) (358 aa).

[4Fe-4S] cluster-binding residues include Cys-265, Cys-268, Cys-300, and Glu-307.

It belongs to the IspG family. The cofactor is [4Fe-4S] cluster.

The enzyme catalyses (2E)-4-hydroxy-3-methylbut-2-enyl diphosphate + oxidized [flavodoxin] + H2O + 2 H(+) = 2-C-methyl-D-erythritol 2,4-cyclic diphosphate + reduced [flavodoxin]. It participates in isoprenoid biosynthesis; isopentenyl diphosphate biosynthesis via DXP pathway; isopentenyl diphosphate from 1-deoxy-D-xylulose 5-phosphate: step 5/6. Functionally, converts 2C-methyl-D-erythritol 2,4-cyclodiphosphate (ME-2,4cPP) into 1-hydroxy-2-methyl-2-(E)-butenyl 4-diphosphate. This is 4-hydroxy-3-methylbut-2-en-1-yl diphosphate synthase (flavodoxin) from Maridesulfovibrio salexigens (strain ATCC 14822 / DSM 2638 / NCIMB 8403 / VKM B-1763) (Desulfovibrio salexigens).